A 60-amino-acid chain; its full sequence is Large ribosomal subunit protein uL30 (60 aa).

The protein belongs to the universal ribosomal protein uL30 family. In terms of assembly, part of the 50S ribosomal subunit.

This Dehalococcoides mccartyi (strain ATCC BAA-2266 / KCTC 15142 / 195) (Dehalococcoides ethenogenes (strain 195)) protein is Large ribosomal subunit protein uL30.